We begin with the raw amino-acid sequence, 75 residues long: U9-theraphotoxin-Cg1a (75 aa).

Residues 1–21 form the signal peptide; it reads MKTLVLFIIFGLAALFLLSSA. Positions 22–29 are excised as a propeptide; the sequence is NELEETER. 3 disulfides stabilise this stretch: Cys-31-Cys-46, Cys-38-Cys-51, and Cys-45-Cys-58.

Belongs to the neurotoxin 10 (Hwtx-1) family. 43 (Jztx-49) subfamily. As to expression, expressed by the venom gland.

The protein resides in the secreted. Functionally, probable ion channel inhibitor. This is U9-theraphotoxin-Cg1a from Chilobrachys guangxiensis (Chinese earth tiger tarantula).